We begin with the raw amino-acid sequence, 268 residues long: Homeobox protein Hox-C4a (268 aa).

A disordered region spans residues 70–129 (PEPDTQRGHGLPHAGHLLGKGQSASCEPPPLPLSPATPSAASSACNQATPEHPNSSASAK). Composition is skewed to low complexity over residues 77 to 95 (GHGL…SASC) and 105 to 114 (ATPSAASSAC). Polar residues predominate over residues 115–128 (NQATPEHPNSSASA). The Antp-type hexapeptide signature appears at 133-138 (VYPWMK). Positions 154–213 (PKRSRTAYTRQQVLELEKEFHYNRYLTRRRRIEIAHSLVLSERQIKIWFQNRRMKWKKDH) form a DNA-binding region, homeobox. Residues 212–268 (DHRLPNTKVRSSSSTGISSGSNTSSAAGVVAAASTTNTMSASEDLSGTERGEDITRL) are disordered. Residues 222-253 (SSSSTGISSGSNTSSAAGVVAAASTTNTMSAS) show a composition bias toward low complexity. Positions 258-268 (GTERGEDITRL) are enriched in basic and acidic residues.

The protein belongs to the Antp homeobox family. Deformed subfamily.

It localises to the nucleus. Functionally, sequence-specific transcription factor which is part of a developmental regulatory system that provides cells with specific positional identities on the anterior-posterior axis. This Danio rerio (Zebrafish) protein is Homeobox protein Hox-C4a (hoxc4a).